Consider the following 246-residue polypeptide: tRNA pseudouridine synthase A (246 aa).

Catalysis depends on Asp-52, which acts as the Nucleophile. Tyr-110 serves as a coordination point for substrate.

Belongs to the tRNA pseudouridine synthase TruA family. In terms of assembly, homodimer.

It carries out the reaction uridine(38/39/40) in tRNA = pseudouridine(38/39/40) in tRNA. Formation of pseudouridine at positions 38, 39 and 40 in the anticodon stem and loop of transfer RNAs. The sequence is that of tRNA pseudouridine synthase A from Exiguobacterium sp. (strain ATCC BAA-1283 / AT1b).